Here is a 251-residue protein sequence, read N- to C-terminus: tRNA pseudouridine synthase A (251 aa).

The active-site Nucleophile is aspartate 52. Tyrosine 113 contacts substrate.

This sequence belongs to the tRNA pseudouridine synthase TruA family. In terms of assembly, homodimer.

The catalysed reaction is uridine(38/39/40) in tRNA = pseudouridine(38/39/40) in tRNA. Formation of pseudouridine at positions 38, 39 and 40 in the anticodon stem and loop of transfer RNAs. The polypeptide is tRNA pseudouridine synthase A (Brucella abortus (strain 2308)).